Reading from the N-terminus, the 102-residue chain is Small ribosomal subunit protein uS14 (102 aa).

This sequence belongs to the universal ribosomal protein uS14 family. Part of the 30S ribosomal subunit. Contacts proteins S3 and S10.

Its function is as follows. Binds 16S rRNA, required for the assembly of 30S particles and may also be responsible for determining the conformation of the 16S rRNA at the A site. The polypeptide is Small ribosomal subunit protein uS14 (Dichelobacter nodosus (strain VCS1703A)).